An 88-amino-acid polypeptide reads, in one-letter code: Defensin-like protein 267 (88 aa).

Residues 1-23 form the signal peptide; the sequence is MMLSKVVLLALLLSLSCLWVAKA. Intrachain disulfides connect cysteine 45-cysteine 63, cysteine 51-cysteine 68, and cysteine 55-cysteine 70.

The protein belongs to the DEFL family.

The protein localises to the secreted. This chain is Defensin-like protein 267, found in Arabidopsis thaliana (Mouse-ear cress).